The following is a 360-amino-acid chain: UDP-N-acetylglucosamine--N-acetylmuramyl-(pentapeptide) pyrophosphoryl-undecaprenol N-acetylglucosamine transferase (360 aa).

UDP-N-acetyl-alpha-D-glucosamine contacts are provided by residues Thr-15–Gly-17, Asn-127, Arg-163, Ser-191, Ile-249, Ala-268–Glu-273, and Gln-293.

Belongs to the glycosyltransferase 28 family. MurG subfamily.

Its subcellular location is the cell inner membrane. It catalyses the reaction di-trans,octa-cis-undecaprenyl diphospho-N-acetyl-alpha-D-muramoyl-L-alanyl-D-glutamyl-meso-2,6-diaminopimeloyl-D-alanyl-D-alanine + UDP-N-acetyl-alpha-D-glucosamine = di-trans,octa-cis-undecaprenyl diphospho-[N-acetyl-alpha-D-glucosaminyl-(1-&gt;4)]-N-acetyl-alpha-D-muramoyl-L-alanyl-D-glutamyl-meso-2,6-diaminopimeloyl-D-alanyl-D-alanine + UDP + H(+). It participates in cell wall biogenesis; peptidoglycan biosynthesis. Cell wall formation. Catalyzes the transfer of a GlcNAc subunit on undecaprenyl-pyrophosphoryl-MurNAc-pentapeptide (lipid intermediate I) to form undecaprenyl-pyrophosphoryl-MurNAc-(pentapeptide)GlcNAc (lipid intermediate II). This Proteus mirabilis (strain HI4320) protein is UDP-N-acetylglucosamine--N-acetylmuramyl-(pentapeptide) pyrophosphoryl-undecaprenol N-acetylglucosamine transferase.